Reading from the N-terminus, the 267-residue chain is ATP synthase subunit a (267 aa).

5 consecutive transmembrane segments (helical) span residues 38-58 (WHIDSLLFSVGLGVLFLFVFY), 98-118 (IAPLALTIFVWILLMNTMDLI), 145-165 (NITFGLSLSVFALIVFYSIKI), 208-228 (LFGNLYAGELIFILIALMPWW), and 238-258 (AIFHILVIVLQAFIFMMLTIV).

The protein belongs to the ATPase A chain family. As to quaternary structure, F-type ATPases have 2 components, CF(1) - the catalytic core - and CF(0) - the membrane proton channel. CF(1) has five subunits: alpha(3), beta(3), gamma(1), delta(1), epsilon(1). CF(0) has three main subunits: a(1), b(2) and c(9-12). The alpha and beta chains form an alternating ring which encloses part of the gamma chain. CF(1) is attached to CF(0) by a central stalk formed by the gamma and epsilon chains, while a peripheral stalk is formed by the delta and b chains.

The protein resides in the cell inner membrane. Its function is as follows. Key component of the proton channel; it plays a direct role in the translocation of protons across the membrane. The polypeptide is ATP synthase subunit a (Psychromonas ingrahamii (strain DSM 17664 / CCUG 51855 / 37)).